The sequence spans 398 residues: Dihydroorotase (398 aa).

Zn(2+) contacts are provided by His-58 and His-60. Substrate contacts are provided by residues 60–62 (HFR) and Asn-92. Asp-151, His-178, and His-215 together coordinate Zn(2+). Asn-256 contributes to the substrate binding site. Asp-283 provides a ligand contact to Zn(2+). Residue Asp-283 is part of the active site. Substrate contacts are provided by residues His-287 and 297–298 (PG).

This sequence belongs to the metallo-dependent hydrolases superfamily. DHOase family. Class I DHOase subfamily. The cofactor is Zn(2+).

It carries out the reaction (S)-dihydroorotate + H2O = N-carbamoyl-L-aspartate + H(+). The protein operates within pyrimidine metabolism; UMP biosynthesis via de novo pathway; (S)-dihydroorotate from bicarbonate: step 3/3. In terms of biological role, catalyzes the reversible cyclization of carbamoyl aspartate to dihydroorotate. This is Dihydroorotase from Clostridium botulinum (strain Eklund 17B / Type B).